A 313-amino-acid chain; its full sequence is L-lactate dehydrogenase 1 (313 aa).

Residues Val15, Asp36, Arg41, and Tyr66 each contribute to the NAD(+) site. Substrate contacts are provided by residues Gln83, Arg89, and 121–124; that span reads NPVD. Residues 119 to 121 and Ser144 contribute to the NAD(+) site; that span reads ASN. 149–152 is a substrate binding site; it reads DTAR. Residues Arg154 and His169 each coordinate beta-D-fructose 1,6-bisphosphate. His176 functions as the Proton acceptor in the catalytic mechanism. Tyr218 bears the Phosphotyrosine mark. Residue Thr227 participates in substrate binding.

It belongs to the LDH/MDH superfamily. LDH family. Homotetramer.

The protein localises to the cytoplasm. The enzyme catalyses (S)-lactate + NAD(+) = pyruvate + NADH + H(+). It participates in fermentation; pyruvate fermentation to lactate; (S)-lactate from pyruvate: step 1/1. With respect to regulation, allosterically activated by fructose 1,6-bisphosphate (FBP). Its function is as follows. Catalyzes the conversion of lactate to pyruvate. The polypeptide is L-lactate dehydrogenase 1 (Listeria monocytogenes serotype 4b (strain F2365)).